A 758-amino-acid polypeptide reads, in one-letter code: 5-methyltetrahydropteroyltriglutamate--homocysteine methyltransferase (758 aa).

Residues 17-20 (RELK) and Lys-117 contribute to the 5-methyltetrahydropteroyltri-L-glutamate site. L-homocysteine contacts are provided by residues 434–436 (IGS) and Glu-487. L-methionine is bound by residues 434–436 (IGS) and Glu-487. 5-methyltetrahydropteroyltri-L-glutamate-binding positions include 518 to 519 (RC) and Trp-564. Residue Asp-602 participates in L-homocysteine binding. Residue Asp-602 participates in L-methionine binding. Glu-608 provides a ligand contact to 5-methyltetrahydropteroyltri-L-glutamate. 3 residues coordinate Zn(2+): His-644, Cys-646, and Glu-668. His-697 (proton donor) is an active-site residue. Residue Cys-729 coordinates Zn(2+).

This sequence belongs to the vitamin-B12 independent methionine synthase family. The cofactor is Zn(2+).

It carries out the reaction 5-methyltetrahydropteroyltri-L-glutamate + L-homocysteine = tetrahydropteroyltri-L-glutamate + L-methionine. The protein operates within amino-acid biosynthesis; L-methionine biosynthesis via de novo pathway; L-methionine from L-homocysteine (MetE route): step 1/1. Functionally, catalyzes the transfer of a methyl group from 5-methyltetrahydrofolate to homocysteine resulting in methionine formation. This chain is 5-methyltetrahydropteroyltriglutamate--homocysteine methyltransferase, found in Photorhabdus laumondii subsp. laumondii (strain DSM 15139 / CIP 105565 / TT01) (Photorhabdus luminescens subsp. laumondii).